The chain runs to 148 residues: Large ribosomal subunit protein uL22c (148 aa).

The protein belongs to the universal ribosomal protein uL22 family. As to quaternary structure, part of the 50S ribosomal subunit.

The protein resides in the plastid. The protein localises to the chloroplast. In terms of biological role, this protein binds specifically to 23S rRNA. Its function is as follows. The globular domain of the protein is located near the polypeptide exit tunnel on the outside of the subunit, while an extended beta-hairpin is found that lines the wall of the exit tunnel in the center of the 70S ribosome. The protein is Large ribosomal subunit protein uL22c (rpl22) of Zea mays (Maize).